The chain runs to 181 residues: Probable toxin TacT (181 aa).

It belongs to the acetyltransferase family. Forms a complex with cognate antitoxin TacA.

Probable toxin component of a type II toxin-antitoxin (TA) system. Might acetylate tRNA and inhibit translation. Should be neutralized by cognate antitoxin TacA (y4aR). The polypeptide is Probable toxin TacT (Sinorhizobium fredii (strain NBRC 101917 / NGR234)).